Reading from the N-terminus, the 250-residue chain is Ubiquinone biosynthesis O-methyltransferase (250 aa).

Residues R41, G72, D93, and M136 each coordinate S-adenosyl-L-methionine.

It belongs to the methyltransferase superfamily. UbiG/COQ3 family.

It catalyses the reaction a 3-demethylubiquinol + S-adenosyl-L-methionine = a ubiquinol + S-adenosyl-L-homocysteine + H(+). The catalysed reaction is a 3-(all-trans-polyprenyl)benzene-1,2-diol + S-adenosyl-L-methionine = a 2-methoxy-6-(all-trans-polyprenyl)phenol + S-adenosyl-L-homocysteine + H(+). It functions in the pathway cofactor biosynthesis; ubiquinone biosynthesis. In terms of biological role, O-methyltransferase that catalyzes the 2 O-methylation steps in the ubiquinone biosynthetic pathway. This Agrobacterium fabrum (strain C58 / ATCC 33970) (Agrobacterium tumefaciens (strain C58)) protein is Ubiquinone biosynthesis O-methyltransferase.